A 100-amino-acid chain; its full sequence is Urease subunit gamma (100 aa).

The protein belongs to the urease gamma subunit family. As to quaternary structure, heterotrimer of UreA (gamma), UreB (beta) and UreC (alpha) subunits. Three heterotrimers associate to form the active enzyme.

Its subcellular location is the cytoplasm. It carries out the reaction urea + 2 H2O + H(+) = hydrogencarbonate + 2 NH4(+). The protein operates within nitrogen metabolism; urea degradation; CO(2) and NH(3) from urea (urease route): step 1/1. This chain is Urease subunit gamma, found in Prochlorococcus marinus (strain MIT 9215).